A 56-amino-acid chain; its full sequence is Ovomucoid (56 aa).

The region spanning 6 to 56 (VDCSEYPKPACTLEYRPLCGSDNKTYGNKCNFCNAVVESNGTLTLSHFGKC) is the Kazal-like domain. Intrachain disulfides connect C8-C38, C16-C35, and C24-C56. The N-linked (GlcNAc...) asparagine glycan is linked to N45.

The protein resides in the secreted. This Meleagris ocellata (Ocellated turkey) protein is Ovomucoid.